A 358-amino-acid chain; its full sequence is MAERQEEQRGSPPLRAEGKADAEVKLILYHWTHSFSSQKVRLVIAEKALKCEEHDVSLPLSEHNEPWFMRLNSTGEVPVLIHGENIICEATQIIDYLEQTFLDERTPRLMPDKESMYYPRVQHYRELLDSLPMDAYTHGCILHPELTVDSMIPAYATTRIRSQIGNTESELKKLAEENPDLQEAYIAKQKRLKSKLLDHDNVKYLKKILDELEKVLDQVETELQRRNEETPEEGQQPWLCGESFTLADVSLAVTLHRLKFLGFARRNWGNGKRPNLETYYERVLKRKTFNKVLGHVNNILISAVLPTAFRVAKKRAPKVLGTTLVVGLLAGVGYFAFMLFRKRLGSMILAFRPRPNYF.

One can recognise a GST N-terminal domain in the interval 24-105 (VKLILYHWTH…YLEQTFLDER (82 aa)). Glycyl lysine isopeptide (Lys-Gly) (interchain with G-Cter in ubiquitin) cross-links involve residues Lys50, Lys172, Lys173, Lys188, and Lys190. The GST C-terminal domain occupies 153–309 (PAYATTRIRS…LISAVLPTAF (157 aa)). Lys203 carries the post-translational modification N6-acetyllysine; alternate. Lys203 is covalently cross-linked (Glycyl lysine isopeptide (Lys-Gly) (interchain with G-Cter in ubiquitin); alternate). Glycyl lysine isopeptide (Lys-Gly) (interchain with G-Cter in ubiquitin) cross-links involve residues Lys206, Lys207, and Lys214. Transmembrane regions (helical) follow at residues 292 to 312 (VLGH…FRVA) and 320 to 340 (LGTT…FMLF). The tract at residues 320 to 358 (LGTTLVVGLLAGVGYFAFMLFRKRLGSMILAFRPRPNYF) is required for mitochondrial localization.

Belongs to the GST superfamily. As to quaternary structure, homodimer. Post-translationally, ubiquitinated by PRKN during mitophagy, leading to its degradation and enhancement of mitophagy. Deubiquitinated by USP30. In terms of tissue distribution, highly expressed in whole brain and spinal cord. Predominant expression in central tissues of the nervous system not only in neurons but also in Schwann cells.

It is found in the mitochondrion outer membrane. The protein resides in the cytoplasm. In terms of biological role, regulates the mitochondrial network by promoting mitochondrial fission. This is Ganglioside-induced differentiation-associated protein 1 (GDAP1) from Homo sapiens (Human).